Consider the following 503-residue polypeptide: Probable cytochrome P450 303a1 (503 aa).

Heme is bound at residue Cys448.

It belongs to the cytochrome P450 family. It depends on heme as a cofactor.

It localises to the endoplasmic reticulum membrane. It is found in the microsome membrane. Functionally, may be involved in the metabolism of insect hormones and in the breakdown of synthetic insecticides. In Drosophila melanogaster (Fruit fly), this protein is Probable cytochrome P450 303a1 (Cyp303a1).